A 276-amino-acid polypeptide reads, in one-letter code: uncharacterized protein (276 aa).

Transmembrane regions (helical) follow at residues 5–25 (TDLI…GMLA), 32–52 (PLVG…GFVG), 64–84 (GVIL…LLAV), 104–124 (AGLA…GLAL), 149–169 (IAVG…VLLP), 193–213 (LWVT…VMLV), and 244–264 (VGIA…GAFF).

This sequence belongs to the monovalent cation:proton antiporter 2 (CPA2) transporter (TC 2.A.37) family.

The protein resides in the cell membrane. This is an uncharacterized protein from Methylorubrum extorquens (Methylobacterium dichloromethanicum).